The following is a 212-amino-acid chain: Pyridoxine/pyridoxamine 5'-phosphate oxidase (212 aa).

Substrate contacts are provided by residues 8 to 11 (RRTY) and Lys-66. Residues 61-66 (RIVLLK), 76-77 (FT), Arg-82, Lys-83, and Gln-105 contribute to the FMN site. Substrate contacts are provided by Tyr-123, Arg-127, and Ser-131. Residues 140 to 141 (QS) and Trp-184 contribute to the FMN site. Residue 190–192 (RLH) coordinates substrate. Arg-194 serves as a coordination point for FMN.

The protein belongs to the pyridoxamine 5'-phosphate oxidase family. In terms of assembly, homodimer. FMN serves as cofactor.

It catalyses the reaction pyridoxamine 5'-phosphate + O2 + H2O = pyridoxal 5'-phosphate + H2O2 + NH4(+). The catalysed reaction is pyridoxine 5'-phosphate + O2 = pyridoxal 5'-phosphate + H2O2. Its pathway is cofactor metabolism; pyridoxal 5'-phosphate salvage; pyridoxal 5'-phosphate from pyridoxamine 5'-phosphate: step 1/1. It participates in cofactor metabolism; pyridoxal 5'-phosphate salvage; pyridoxal 5'-phosphate from pyridoxine 5'-phosphate: step 1/1. Its function is as follows. Catalyzes the oxidation of either pyridoxine 5'-phosphate (PNP) or pyridoxamine 5'-phosphate (PMP) into pyridoxal 5'-phosphate (PLP). The polypeptide is Pyridoxine/pyridoxamine 5'-phosphate oxidase (Cupriavidus pinatubonensis (strain JMP 134 / LMG 1197) (Cupriavidus necator (strain JMP 134))).